The chain runs to 99 residues: MFNSIKRDLKRRKLYKKYESKRLLYKALISDCNLNQDLRFILTQKLNKLPRNSSQVRVKNRCILTGRGHSVYKFCRISRIKFRDLANQGLIQGCVKSSW.

This sequence belongs to the universal ribosomal protein uS14 family.

It is found in the mitochondrion. The polypeptide is Small ribosomal subunit protein uS14m (RPS14) (Prototheca wickerhamii).